Here is an 84-residue protein sequence, read N- to C-terminus: Cell division topological specificity factor (84 aa).

It belongs to the MinE family.

Prevents the cell division inhibition by proteins MinC and MinD at internal division sites while permitting inhibition at polar sites. This ensures cell division at the proper site by restricting the formation of a division septum at the midpoint of the long axis of the cell. The polypeptide is Cell division topological specificity factor (Pseudomonas aeruginosa (strain LESB58)).